Consider the following 341-residue polypeptide: Probable long-chain-alcohol O-fatty-acyltransferase 1 (341 aa).

Helical transmembrane passes span 7–27 (NLIEVWISALISLSYCYYISS), 36–56 (LLSILPVCILFLVLPLFLSCV), 58–78 (FCAISVLFLSWLANFKLLLFA), 120–140 (PMPKWVLAVKILVLGVLLHVY), 149–169 (FVVLALYCLHIYLEVELVLVF), 233–253 (MFAGVMASFFVSGLMHELLYF), 261–281 (TWEVTCFFVLHGAATATEIAV), and 293–313 (AVSGLVVLTFVSVTGVWLFLA).

Belongs to the wax synthase family.

The protein resides in the membrane. The catalysed reaction is a long chain fatty alcohol + a fatty acyl-CoA = a wax ester + CoA. Catalyzes the final step in the synthesis of long-chain linear esters (waxes). In Arabidopsis thaliana (Mouse-ear cress), this protein is Probable long-chain-alcohol O-fatty-acyltransferase 1 (AT1).